The sequence spans 398 residues: Streptopain (398 aa).

A signal peptide spans Met-1–Ala-27. A propeptide spanning residues Asp-28–Lys-145 is cleaved from the precursor. Cys-192 (nucleophile) is an active-site residue. At Cys-192 the chain carries Cysteine methyl disulfide; in zymogen form. 2 residues coordinate a protein: Ser-282 and Gly-339. His-340 (proton acceptor) is an active-site residue. A C-terminal active site loop region spans residues Arg-368–Gln-390.

Belongs to the peptidase C10 family. In terms of assembly, monomer. Post-translationally, the mature protease is derived from the precursor sequence by cleavage, either in cis via an autocatalytic mechanism, or in trans by mature SpeB or host proteases (trypsin, plasmin or subtilisin). Maturation can involve a number of protein cleavage intermediates. Mature SpeB probably plays the most important role in protein maturation in physiological conditions. Methylthiolation at Cys-192 of the inactive zymogen form is probably involved in the mechanism of secretion of the proteinase into the culture fluid.

The protein resides in the secreted. The protein localises to the host extracellular space. Its subcellular location is the host cytoplasm. The enzyme catalyses Preferential cleavage with hydrophobic residues at P2, P1 and P1'.. Its activity is regulated as follows. Synthesized as an inactive zymogen to protect the intracellular components of the bacteria from proteolytic activity during protein production. Once secreted into the extracellular milieu, cleaved into the active protease: maturation can be mediated in cis by autocatalytic cleavage, or in trans by mature SpeB or host proteases. Protease activity is strongly inhibited by zinc and copper, which prevent its maturation into an active protease: inhibition by metal ions may be required to prevent proteolysis of streptococcal proteins. Cysteine protease that acts as a key streptococcal virulence factor by cleaving host proteins involved in immune response. Triggers inflammation by mediating cleavage of host proteins, which can both promote host pathogenesis by triggering sterile inflammation and/or restrict streptococcal infection, depending on host immune statue and infection site. Cleaves host gasdermin-A (GSDMA) in epithelial cells, promoting GSDMA activation and formation of gasdermin pores, triggering pyroptosis. Pyroptosis triggers the elimination of the infected skin cell, depriving the pathogen of its protective niche, while inducing an inflammatory response. This ultimately prevents bacterial penetration of the epithelial barrier and a subsequent systemic dissemination of the pathogen. Also mediates cleavage of the cytokine precursor interleukin-1 beta (IL1B) to its mature form, resulting in inflammation and septic shock. SpeB-mediated maturation of IL1B plays a dual role depending on infection site: while IL1B inflammatory response prevents bacterial growth during invasive skin infections, it promotes streptococcal infection of the nasopharynx by disrupting colonization resistance mediated by the microbiota. Inhibits host autophagy be catalyzing cleavage and inactivation of key autophagy factors, such as CALCOCO2, NBR1 and SQSTM1. Cleaves and inhibits a number of complement factors, such as C2, C3-beta chain of C3, C4, C5 or SERPING1, thereby promoting evasion of host immunity. May also impair adaptive immunity by catalyzing cleavage and degradation of host immunoglobulins to promote immune system evasion; the relevance of this activity is however unsure in vivo. Catalyzes maturation and release of the peptide hormone bradykinin from the precursor Kininogen-1 (KNG1) to produce hypotension during septic shock. Also involved in bacterial translocation across the host epithelial barrier by mediating cleavage and degradation of host epithelial junction proteins, such as CDH1 and OCLN. Additionally, has been involved in degradation of fibronectin and vitronectin, two host extracellular matrix proteins involved in tissue integrity. Also able to catalyze cleavage and degradation of streptococcal proteins, such as C5a peptidase, EndoS or SmeZ. Degradation of streptococcal proteins is however strictly regulated to preserve integrity of other virulence factors. The chain is Streptopain (speB) from Streptococcus pyogenes serotype M28 (strain MGAS6180).